The sequence spans 133 residues: Agglutinin alpha chain (133 aa).

One can recognise a Jacalin-type lectin domain in the interval 1–133 (GKAFDDGAFT…LDYFSMYLSL (133 aa)). The stretch at residues 7-64 (GAFTGIREINLSYNKETAIGDFQVVYDLNGSPYVGQNHKSFITGFTPVKISLDFPSEY) is a repeat. N-linked (GlcNAc...) asparagine; when associated with variant T-45; partial glycosylation occurs at asparagine 43. Residues 68–89 (VSGYTGNVSGYVVVRSLTFKTN) are igA-binding. N-linked (GlcNAc...) asparagine; partial glycosylation is present at asparagine 74. A repeat spans 76–130 (SGYVVVRSLTFKTNKKTYGPYGVTSGTPFNLPIENGLIVGFKGSIGYWLDYFSMY).

It belongs to the jacalin lectin family. Tetramer of four alpha chains associated with two or four beta chains.

Its function is as follows. D-galactose-specific lectin, binds the T-antigen structure Gal-beta1,3-GalNAc (Thomsen-Friedenreich-antigen-specific lectin). Potent and selective stimulant of distinct T- and B-cell functions. Shows a unique ability to specifically recognize IgA-1 from human serum. In Artocarpus integer (Jack fruit), this protein is Agglutinin alpha chain.